A 102-amino-acid chain; its full sequence is uncharacterized protein (102 aa).

2 helical membrane passes run 21 to 43 (FSSSALVGIAPLTAYSALVTPVF) and 58 to 80 (SFAVNTPFKSCWCVIVMCSYFFC).

It localises to the membrane. This is an uncharacterized protein from Saccharomyces cerevisiae (strain ATCC 204508 / S288c) (Baker's yeast).